We begin with the raw amino-acid sequence, 424 residues long: Adenylosuccinate synthetase (424 aa).

Residues 12–18 (GDEGKGK) and 40–42 (GHT) contribute to the GTP site. The active-site Proton acceptor is the Asp-13. Positions 13 and 40 each coordinate Mg(2+). IMP-binding positions include 13-16 (DEGK), 38-41 (NAGH), Thr-128, Arg-142, Gln-223, Thr-238, and Arg-302. His-41 acts as the Proton donor in catalysis. 298 to 304 (TTTGRPR) contacts substrate. Residues Arg-304, 330-332 (HVD), and 412-414 (GVG) each bind GTP.

The protein belongs to the adenylosuccinate synthetase family. Homodimer. Mg(2+) is required as a cofactor.

The protein localises to the cytoplasm. It carries out the reaction IMP + L-aspartate + GTP = N(6)-(1,2-dicarboxyethyl)-AMP + GDP + phosphate + 2 H(+). It participates in purine metabolism; AMP biosynthesis via de novo pathway; AMP from IMP: step 1/2. Functionally, plays an important role in the de novo pathway of purine nucleotide biosynthesis. Catalyzes the first committed step in the biosynthesis of AMP from IMP. The protein is Adenylosuccinate synthetase of Acetivibrio thermocellus (strain ATCC 27405 / DSM 1237 / JCM 9322 / NBRC 103400 / NCIMB 10682 / NRRL B-4536 / VPI 7372) (Clostridium thermocellum).